The chain runs to 313 residues: Adhesin MafA 1/2 (313 aa).

The signal sequence occupies residues 1-14 (MKTLLLLIPLVLTA). Cys-15 carries N-palmitoyl cysteine lipidation. The S-diacylglycerol cysteine moiety is linked to residue Cys-15. Residues 282-298 (GDTTAQNRPDFKQNNGK) are compositionally biased toward polar residues. The disordered stretch occupies residues 282–313 (GDTTAQNRPDFKQNNGKNPDVGNEVIRRRKGG).

This sequence belongs to the MafA family.

It is found in the cell outer membrane. This chain is Adhesin MafA 1/2 (mafA1), found in Neisseria meningitidis serogroup C (strain 053442).